A 305-amino-acid chain; its full sequence is U6 small nuclear RNA (adenine-(43)-N(6))-methyltransferase (305 aa).

Residues R85, G110, E133, S164, and N186 each coordinate S-adenosyl-L-methionine. The interval 194–217 is disordered; it reads SPNPFGGNTRNPQRRPAPNNVRTG.

This sequence belongs to the methyltransferase superfamily. METTL16/RlmF family.

The enzyme catalyses adenosine in U6 snRNA + S-adenosyl-L-methionine = N(6)-methyladenosine in U6 snRNA + S-adenosyl-L-homocysteine + H(+). Functionally, RNA N6-methyltransferase that mediates N6-methylation of adenine of U6 small nuclear RNA (U6 snRNA). The chain is U6 small nuclear RNA (adenine-(43)-N(6))-methyltransferase from Drosophila pseudoobscura pseudoobscura (Fruit fly).